A 65-amino-acid polypeptide reads, in one-letter code: Weak neurotoxin 8 (65 aa).

5 disulfides stabilise this stretch: cysteine 3–cysteine 24, cysteine 6–cysteine 11, cysteine 17–cysteine 42, cysteine 46–cysteine 57, and cysteine 58–cysteine 63.

The protein belongs to the three-finger toxin family. Ancestral subfamily. Orphan group II sub-subfamily. In terms of tissue distribution, expressed by the venom gland.

The protein resides in the secreted. In terms of biological role, binds with low affinity to muscular (alpha-1-beta-1-delta-epsilon/CHRNA1-CHRNB1-CHRND-CHRNE) and very low affinity to neuronal (alpha-7/CHRNA7) nicotinic acetylcholine receptor (nAChR). This Naja naja (Indian cobra) protein is Weak neurotoxin 8.